A 761-amino-acid polypeptide reads, in one-letter code: 1,2-alpha-glucosylglycerol phosphorylase (761 aa).

327-328 is a binding site for glycerol; the sequence is YQ. 333–334 contacts substrate; sequence WD. The Proton donor role is filled by Glu475. 587–588 lines the substrate pocket; that stretch reads KQ.

This sequence belongs to the glycosyl hydrolase 65 family. As to quaternary structure, homodimer.

The catalysed reaction is 2-O-(alpha-D-glucopyranosyl)glycerol + phosphate = beta-D-glucose 1-phosphate + glycerol. Its function is as follows. Catalyzes both the (1) reversible phosphorolysis of 2-O-alpha-D-glucopyranosyl-sn-glycerol (GG) from beta-D-glucose 1-phosphate (betaGlc1P) and glycerol and (2) the hydrolysis of betaGlc1P. the betaGlc1P hydrolysis is a glucosyl-transfer reaction to an acceptor water molecule that produces an anomer-inverted alpha-glucose, not a phosphatase-type reaction. In the absence of glycerol produces alpha-D-glucopyranose and phosphate from beta-D-glucopyranose 1-phosphate. The chain is 1,2-alpha-glucosylglycerol phosphorylase from Bacillus selenitireducens (strain ATCC 700615 / DSM 15326 / MLS10).